Consider the following 450-residue polypeptide: MGKYFGTDGVRGEANVELTPELAFKLGRFGGYVLSQHETGTPRVFVARDTRISGEMLESALVAGLLSVGIEVYKLGVLATPGVSYLVRTENASAGVMISASHNPALDNGIKFFGSDGFKLADDQELEIEALLDAEEDTLPRPSAEGLGTLVDYPEGLRKYEKFLVSTGINLEGMKVALDTANGAASVSARDVFLDLQADISVIGEQPNGLNINDGIGSTHPEKLQELVKETGSAVGLAFDGDSDRLIAVDENGDIVDGDKIMFIIGKYLSEKGLLAQNTIVTTVMSNLGFHKALDQHGINKAVTAVGDRYVVEEMRQSNYNLGGEQSGHVIIMDYNTTGDGQLTAIQLTKVMKETGMSLSELAAQVTIYPQKLVNIRVDNSMKHKAMEVPAIAAIIEKMEAEMQGNGRILVRPSGTEPLLRVMAEAPTDEEVDYYVDTIADVVRTEIGIA.

Residue Ser101 is the Phosphoserine intermediate of the active site. The Mg(2+) site is built by Ser101, Asp240, Asp242, and Asp244. At Ser101 the chain carries Phosphoserine.

It belongs to the phosphohexose mutase family. Requires Mg(2+) as cofactor. Post-translationally, activated by phosphorylation.

It carries out the reaction alpha-D-glucosamine 1-phosphate = D-glucosamine 6-phosphate. In terms of biological role, catalyzes the conversion of glucosamine-6-phosphate to glucosamine-1-phosphate. The chain is Phosphoglucosamine mutase from Streptococcus uberis (strain ATCC BAA-854 / 0140J).